Consider the following 61-residue polypeptide: Large ribosomal subunit protein uL29 (61 aa).

This sequence belongs to the universal ribosomal protein uL29 family.

This chain is Large ribosomal subunit protein uL29, found in Nitratidesulfovibrio vulgaris (strain DSM 19637 / Miyazaki F) (Desulfovibrio vulgaris).